We begin with the raw amino-acid sequence, 330 residues long: o-succinylbenzoate synthase (330 aa).

The active-site Proton donor is lysine 130. 3 residues coordinate Mg(2+): aspartate 155, glutamate 184, and aspartate 206. Residue lysine 228 is the Proton acceptor of the active site.

The protein belongs to the mandelate racemase/muconate lactonizing enzyme family. MenC type 1 subfamily. Monomer. A divalent metal cation serves as cofactor.

The catalysed reaction is (1R,6R)-6-hydroxy-2-succinyl-cyclohexa-2,4-diene-1-carboxylate = 2-succinylbenzoate + H2O. The protein operates within quinol/quinone metabolism; 1,4-dihydroxy-2-naphthoate biosynthesis; 1,4-dihydroxy-2-naphthoate from chorismate: step 4/7. It participates in cofactor biosynthesis; phylloquinone biosynthesis. Converts 2-succinyl-6-hydroxy-2,4-cyclohexadiene-1-carboxylate (SHCHC) to 2-succinylbenzoate (OSB). Does not show N-succinylamino acid racemase (NSAR) activity with N-succinyl-L-phenylglycine as substrate. This chain is o-succinylbenzoate synthase, found in Bdellovibrio bacteriovorus (strain ATCC 15356 / DSM 50701 / NCIMB 9529 / HD100).